The sequence spans 129 residues: Small ribosomal subunit protein uS11 (129 aa).

Belongs to the universal ribosomal protein uS11 family. Part of the 30S ribosomal subunit. Interacts with proteins S7 and S18. Binds to IF-3.

In terms of biological role, located on the platform of the 30S subunit, it bridges several disparate RNA helices of the 16S rRNA. Forms part of the Shine-Dalgarno cleft in the 70S ribosome. This Enterococcus faecalis (strain ATCC 700802 / V583) protein is Small ribosomal subunit protein uS11.